Consider the following 579-residue polypeptide: Probable cytochrome c oxidase subunit 1-alpha (579 aa).

A disordered region spans residues 1–21 (MSILNEPQGAAAAEDSYENEL). A helical transmembrane segment spans residues 44 to 64 (IGTLYLVTSFAFFCIGGVMAL). Fe(II)-heme a is bound at residue His90. The next 6 helical transmembrane spans lie at 93–113 (IMLL…IMPL), 125–145 (LNMF…GGFL), 174–194 (MWIM…VNFI), 217–237 (VLLT…ALFA), 262–282 (LFWF…FGII), and 295–315 (FGYM…VTVW). Cu cation-binding residues include His268 and Tyr272. The 1'-histidyl-3'-tyrosine (His-Tyr) cross-link spans 268-272 (HPEVY). Residues His317 and His318 each contribute to the Cu cation site. Helical transmembrane passes span 319–339 (MYVT…LIAV), 363–383 (MLWA…GVIL), 397–417 (FVVA…MFSG), 437–457 (ITFW…HWLG), and 480–500 (ISTI…YNVW). His401 contributes to the heme a3 binding site. Residue His403 participates in Fe(II)-heme a binding.

The protein belongs to the heme-copper respiratory oxidase family. Associates with subunits II, III and IV to form cytochrome c oxidase. The cofactor is Cu(2+). Requires heme as cofactor.

Its subcellular location is the cell membrane. The catalysed reaction is 4 Fe(II)-[cytochrome c] + O2 + 8 H(+)(in) = 4 Fe(III)-[cytochrome c] + 2 H2O + 4 H(+)(out). Its pathway is energy metabolism; oxidative phosphorylation. Functionally, cytochrome c oxidase is the component of the respiratory chain that catalyzes the reduction of oxygen to water. Subunits 1-3 form the functional core of the enzyme complex. CO I is the catalytic subunit of the enzyme. Electrons originating in cytochrome c are transferred via the copper A center of subunit 2 and heme A of subunit 1 to the bimetallic center formed by heme A3 and copper B. This Streptomyces avermitilis (strain ATCC 31267 / DSM 46492 / JCM 5070 / NBRC 14893 / NCIMB 12804 / NRRL 8165 / MA-4680) protein is Probable cytochrome c oxidase subunit 1-alpha (ctaD1).